The sequence spans 619 residues: Probable Xaa-Pro aminopeptidase P (619 aa).

Mn(2+) is bound by residues D415, D426, E524, and E538.

It belongs to the peptidase M24B family. The cofactor is Mn(2+).

The enzyme catalyses Release of any N-terminal amino acid, including proline, that is linked to proline, even from a dipeptide or tripeptide.. Catalyzes the removal of a penultimate prolyl residue from the N-termini of peptides. The protein is Probable Xaa-Pro aminopeptidase P (AMPP) of Fusarium vanettenii (strain ATCC MYA-4622 / CBS 123669 / FGSC 9596 / NRRL 45880 / 77-13-4) (Fusarium solani subsp. pisi).